A 288-amino-acid polypeptide reads, in one-letter code: Tryptophan 2,3-dioxygenase (288 aa).

Residues 57-61 (FIIQH), tyrosine 119, and arginine 123 contribute to the substrate site. Histidine 246 is a binding site for heme. Threonine 260 lines the substrate pocket.

Belongs to the tryptophan 2,3-dioxygenase family. Homotetramer. It depends on heme as a cofactor.

It catalyses the reaction L-tryptophan + O2 = N-formyl-L-kynurenine. It functions in the pathway amino-acid degradation; L-tryptophan degradation via kynurenine pathway; L-kynurenine from L-tryptophan: step 1/2. Heme-dependent dioxygenase that catalyzes the oxidative cleavage of the L-tryptophan (L-Trp) pyrrole ring and converts L-tryptophan to N-formyl-L-kynurenine. Catalyzes the oxidative cleavage of the indole moiety. The sequence is that of Tryptophan 2,3-dioxygenase from Pseudomonas aeruginosa (strain UCBPP-PA14).